Consider the following 616-residue polypeptide: Sulfite reductase [NADPH] flavoprotein alpha-component (616 aa).

A Flavodoxin-like domain is found at 80-218 (LTIIFASQTG…SAAQWRKQAL (139 aa)). FMN is bound by residues 86-91 (SQTGNA), 133-136 (STNG), and 169-178 (LGDSSYEFFC). An FAD-binding FR-type domain is found at 251 to 465 (QKPYAATLLT…VENNNNFKLP (215 aa)). Residues T339, G373, 403–406 (RLYS), 421–423 (TVG), Y427, and 436–439 (GGAS) each bind FAD. NADP(+) contacts are provided by residues 536–537 (SR), 542–546 (KVYVQ), and D578. Residue Y616 participates in FAD binding.

The protein belongs to the NADPH-dependent sulphite reductase flavoprotein subunit CysJ family. This sequence in the N-terminal section; belongs to the flavodoxin family. In the C-terminal section; belongs to the flavoprotein pyridine nucleotide cytochrome reductase family. In terms of assembly, alpha(8)-beta(8). The alpha component is a flavoprotein, the beta component is a hemoprotein. It depends on FAD as a cofactor. FMN is required as a cofactor.

The enzyme catalyses hydrogen sulfide + 3 NADP(+) + 3 H2O = sulfite + 3 NADPH + 4 H(+). The protein operates within sulfur metabolism; hydrogen sulfide biosynthesis; hydrogen sulfide from sulfite (NADPH route): step 1/1. In terms of biological role, component of the sulfite reductase complex that catalyzes the 6-electron reduction of sulfite to sulfide. This is one of several activities required for the biosynthesis of L-cysteine from sulfate. The flavoprotein component catalyzes the electron flow from NADPH -&gt; FAD -&gt; FMN to the hemoprotein component. This chain is Sulfite reductase [NADPH] flavoprotein alpha-component, found in Vibrio vulnificus (strain CMCP6).